We begin with the raw amino-acid sequence, 313 residues long: tRNA dimethylallyltransferase (313 aa).

Residue 20–27 (GPTGTGKS) participates in ATP binding. Substrate is bound at residue 22-27 (TGTGKS).

It belongs to the IPP transferase family. Monomer. Mg(2+) is required as a cofactor.

The enzyme catalyses adenosine(37) in tRNA + dimethylallyl diphosphate = N(6)-dimethylallyladenosine(37) in tRNA + diphosphate. Functionally, catalyzes the transfer of a dimethylallyl group onto the adenine at position 37 in tRNAs that read codons beginning with uridine, leading to the formation of N6-(dimethylallyl)adenosine (i(6)A). The chain is tRNA dimethylallyltransferase from Kocuria rhizophila (strain ATCC 9341 / DSM 348 / NBRC 103217 / DC2201).